Here is a 227-residue protein sequence, read N- to C-terminus: MRTGLIAKKLGMTRLFKEDGTHVPVTVLHLDNVEVVDARTNERDGYTAIQLGLGNAKVKNVTKANRGHFARTKVEPKRHLAEFRVSEDALLEAGTKLSAAHFVVGQKVDVTGQSKGKGFAGVMKRHNFAGLEASHGVSISHRSHGSTGQRQDPGKVFKGKKMAGHMGDERVTTLNLEIAAVDEERNLIMVRGAIPGAKNGLVLIRDAIKKARHADAPYPAATVAAAG.

Gln151 carries the N5-methylglutamine modification.

This sequence belongs to the universal ribosomal protein uL3 family. In terms of assembly, part of the 50S ribosomal subunit. Forms a cluster with proteins L14 and L19. Post-translationally, methylated by PrmB.

One of the primary rRNA binding proteins, it binds directly near the 3'-end of the 23S rRNA, where it nucleates assembly of the 50S subunit. The polypeptide is Large ribosomal subunit protein uL3 (Gluconobacter oxydans (strain 621H) (Gluconobacter suboxydans)).